Reading from the N-terminus, the 336-residue chain is Spore photoproduct lyase (336 aa).

Residues Cys74–Tyr305 form the Radical SAM core domain. Cys88, Cys92, and Cys95 together coordinate [4Fe-4S] cluster. The H-T-H motif DNA-binding region spans Glu215–Gly232.

Belongs to the radical SAM superfamily. SPL family. In terms of assembly, monomer or homodimer. [4Fe-4S] cluster serves as cofactor. It depends on S-adenosyl-L-methionine as a cofactor.

It carries out the reaction (5R)-5,6-dihydro-5-(thymidin-7-yl)thymidine in DNA = a thymidine dimer in DNA. Involved in repair of UV radiation-induced DNA damage during spore germination. Can repair thymine dimer 5-thyminyl-5,6-dihydrothymine (known as spore photoproduct (SP)) by in situ monomerization of SP to two thymines. The polypeptide is Spore photoproduct lyase (splB) (Clostridium acetobutylicum (strain ATCC 824 / DSM 792 / JCM 1419 / IAM 19013 / LMG 5710 / NBRC 13948 / NRRL B-527 / VKM B-1787 / 2291 / W)).